Here is a 96-residue protein sequence, read N- to C-terminus: Co-chaperonin GroES 1 (96 aa).

Belongs to the GroES chaperonin family. As to quaternary structure, heptamer of 7 subunits arranged in a ring. Interacts with the chaperonin GroEL.

It is found in the cytoplasm. Functionally, together with the chaperonin GroEL, plays an essential role in assisting protein folding. The GroEL-GroES system forms a nano-cage that allows encapsulation of the non-native substrate proteins and provides a physical environment optimized to promote and accelerate protein folding. GroES binds to the apical surface of the GroEL ring, thereby capping the opening of the GroEL channel. This chain is Co-chaperonin GroES 1, found in Vibrio vulnificus (strain CMCP6).